The following is a 287-amino-acid chain: MYLNIPTEIWLCILKMDIDSTINLLFTNKYFFDLFEFAKHNFNVLHEVIKRGYVHILKYVDELENLGPLVFIETMNVHDKLKLACNHDQLPIVKYLVETNSNIETINDDVIITASFYGRTNIVEYFIKKDIDNKTIFEALKNACDNGHLETMILLINNGVDIKAKDNFIIKQAISKGHLNIVKYLVENGATIDIEDDTYIINSAQKGYYKMVEYLVYRGADYRTVDDLPIRCALMGGHLDVVKYLQSLGADIEADNESTIDYVFKHGPNESKEYLERYFYWNSLING.

ANK repeat units follow at residues 40 to 71, 76 to 105, 107 to 134, 135 to 164, 165 to 194, 196 to 224, and 225 to 254; these read HNFN…PLVF, NVHD…NIET, NDDV…IDNK, TIFE…DIKA, KDNF…TIDI, DDTY…DYRT, and VDDL…DIEA.

In Acanthamoeba polyphaga (Amoeba), this protein is Putative ankyrin repeat protein R791.